The sequence spans 415 residues: Peptide chain release factor subunit 1 (415 aa).

The protein belongs to the eukaryotic release factor 1 family. Heterodimer of two subunits, one of which binds GTP.

The protein localises to the cytoplasm. Directs the termination of nascent peptide synthesis (translation) in response to the termination codons UAA, UAG and UGA. This chain is Peptide chain release factor subunit 1, found in Methanosarcina mazei (strain ATCC BAA-159 / DSM 3647 / Goe1 / Go1 / JCM 11833 / OCM 88) (Methanosarcina frisia).